A 64-amino-acid polypeptide reads, in one-letter code: UPF0434 protein Bcen_1934 (64 aa).

This sequence belongs to the UPF0434 family.

The sequence is that of UPF0434 protein Bcen_1934 from Burkholderia orbicola (strain AU 1054).